A 129-amino-acid chain; its full sequence is UPF0102 protein amb4503 (129 aa).

It belongs to the UPF0102 family.

The chain is UPF0102 protein amb4503 from Paramagnetospirillum magneticum (strain ATCC 700264 / AMB-1) (Magnetospirillum magneticum).